The sequence spans 152 residues: Ribosomal RNA large subunit methyltransferase H (152 aa).

S-adenosyl-L-methionine-binding positions include L70, G101, and 120 to 125; that span reads LSDLTF.

The protein belongs to the RNA methyltransferase RlmH family. As to quaternary structure, homodimer.

Its subcellular location is the cytoplasm. The catalysed reaction is pseudouridine(1915) in 23S rRNA + S-adenosyl-L-methionine = N(3)-methylpseudouridine(1915) in 23S rRNA + S-adenosyl-L-homocysteine + H(+). Functionally, specifically methylates the pseudouridine at position 1915 (m3Psi1915) in 23S rRNA. This Pseudothermotoga lettingae (strain ATCC BAA-301 / DSM 14385 / NBRC 107922 / TMO) (Thermotoga lettingae) protein is Ribosomal RNA large subunit methyltransferase H.